The chain runs to 203 residues: Undecaprenyl phosphate transporter A (203 aa).

5 consecutive transmembrane segments (helical) span residues 16 to 36 (AIFI…EIIL), 48 to 68 (LSIL…LLIL), 108 to 128 (YGVW…LITI), 137 to 157 (VVTF…GLIL), and 173 to 193 (LHTY…YFAI).

It belongs to the DedA family.

The protein resides in the cell membrane. Functionally, flippase that catalyzes the transport of undecaprenyl phosphate (UndP) across the cytoplasmic membrane, from the external side to the cytoplasmic side. Is involved in UndP recycling during peptidoglycan synthesis. This is Undecaprenyl phosphate transporter A from Staphylococcus aureus (strain NCTC 8325 / PS 47).